The sequence spans 129 residues: Fluoride-specific ion channel FluC (129 aa).

4 consecutive transmembrane segments (helical) span residues 8-28 (ILLV…VALW), 34-54 (AVFP…IGFI), 70-90 (IFLV…MIEH), and 102-122 (AALY…LGII). Na(+)-binding residues include Gly-78 and Thr-81.

Belongs to the fluoride channel Fluc/FEX (TC 1.A.43) family.

It is found in the cell inner membrane. The enzyme catalyses fluoride(in) = fluoride(out). With respect to regulation, na(+) is not transported, but it plays an essential structural role and its presence is essential for fluoride channel function. Fluoride-specific ion channel. Important for reducing fluoride concentration in the cell, thus reducing its toxicity. The sequence is that of Fluoride-specific ion channel FluC from Chlorobium chlorochromatii (strain CaD3).